A 378-amino-acid chain; its full sequence is Apoptosis-inducing factor 1 (378 aa).

The helical transmembrane segment at 7-25 (NIVVVGAGVFGVSVANHLY) threads the bilayer. FAD contacts are provided by residues 12–16 (GAGVF), arginine 51, lysine 56, and aspartate 283.

It belongs to the FAD-dependent oxidoreductase family. FAD serves as cofactor.

It localises to the mitochondrion outer membrane. Its subcellular location is the nucleus. Functionally, putative FAD-dependent oxidoreductase involved in the resistance to cercosporin and other singlet oxygen-generating photosensitizers. Translocates from mitochondria to the nucleus under apoptotic conditions, where it degrades DNA and induces apoptosis. The chain is Apoptosis-inducing factor 1 (AIF1) from Saccharomyces cerevisiae (strain ATCC 204508 / S288c) (Baker's yeast).